The primary structure comprises 330 residues: MKPLRLAFAGTPDFAAASLQAVLDNGHQVVAVLTQPDRAAGRGKKLQQSPVKQLAHSQGITVLQPENLKGEAIHQQLRDLNLDALVVVAYGLIIPQAVLDMPRLGCLNVHGSLLPRWRGAAPIQRAITAGDTETGNTIMQMEAGLDTGPMLLSESLPIGDSETGGELHDRLAAQGARLLVTVLQDLEKYLANATPQPDEGITYAHKLSKAEARLDFRLPTGALYNRIRAFNPFPVSWVPLNGQPMRIWRASESPQPAQANDEPGYILSVDDQGIHVATGDGSLILEELQLPGKRRMAVSDLLRGNPTLFSVGEPLGDAIINESGDHSGNA.

Residue 112 to 115 (SLLP) coordinates (6S)-5,6,7,8-tetrahydrofolate.

Belongs to the Fmt family.

It catalyses the reaction L-methionyl-tRNA(fMet) + (6R)-10-formyltetrahydrofolate = N-formyl-L-methionyl-tRNA(fMet) + (6S)-5,6,7,8-tetrahydrofolate + H(+). Attaches a formyl group to the free amino group of methionyl-tRNA(fMet). The formyl group appears to play a dual role in the initiator identity of N-formylmethionyl-tRNA by promoting its recognition by IF2 and preventing the misappropriation of this tRNA by the elongation apparatus. In Alcanivorax borkumensis (strain ATCC 700651 / DSM 11573 / NCIMB 13689 / SK2), this protein is Methionyl-tRNA formyltransferase.